Here is a 559-residue protein sequence, read N- to C-terminus: Dihydroxy-acid dehydratase 2 (559 aa).

Cys-53 serves as a coordination point for [2Fe-2S] cluster. Asp-85 contributes to the Mg(2+) binding site. [2Fe-2S] cluster is bound at residue Cys-126. Asp-127 and Lys-128 together coordinate Mg(2+). Lys-128 carries the post-translational modification N6-carboxylysine. Residue Cys-195 participates in [2Fe-2S] cluster binding. Glu-446 is a Mg(2+) binding site. Ser-472 (proton acceptor) is an active-site residue.

The protein belongs to the IlvD/Edd family. As to quaternary structure, homodimer. [2Fe-2S] cluster is required as a cofactor. The cofactor is Mg(2+).

It catalyses the reaction (2R)-2,3-dihydroxy-3-methylbutanoate = 3-methyl-2-oxobutanoate + H2O. It carries out the reaction (2R,3R)-2,3-dihydroxy-3-methylpentanoate = (S)-3-methyl-2-oxopentanoate + H2O. The protein operates within amino-acid biosynthesis; L-isoleucine biosynthesis; L-isoleucine from 2-oxobutanoate: step 3/4. It participates in amino-acid biosynthesis; L-valine biosynthesis; L-valine from pyruvate: step 3/4. Functionally, functions in the biosynthesis of branched-chain amino acids. Catalyzes the dehydration of (2R,3R)-2,3-dihydroxy-3-methylpentanoate (2,3-dihydroxy-3-methylvalerate) into 2-oxo-3-methylpentanoate (2-oxo-3-methylvalerate) and of (2R)-2,3-dihydroxy-3-methylbutanoate (2,3-dihydroxyisovalerate) into 2-oxo-3-methylbutanoate (2-oxoisovalerate), the penultimate precursor to L-isoleucine and L-valine, respectively. This Pseudoalteromonas translucida (strain TAC 125) protein is Dihydroxy-acid dehydratase 2.